The primary structure comprises 511 residues: GMP synthase [glutamine-hydrolyzing] (511 aa).

One can recognise a Glutamine amidotransferase type-1 domain in the interval 5 to 195 (DILVLDFGSQ…AKYACNCESV (191 aa)). The active-site Nucleophile is Cys82. Residues His169 and Glu171 contribute to the active site. Residues 196–386 (WNMGSFAKTQ…LGLSKEVVYR (191 aa)) form the GMPS ATP-PPase domain. Residue 223–229 (SGGVDSS) coordinates ATP.

Homodimer.

The catalysed reaction is XMP + L-glutamine + ATP + H2O = GMP + L-glutamate + AMP + diphosphate + 2 H(+). It participates in purine metabolism; GMP biosynthesis; GMP from XMP (L-Gln route): step 1/1. Functionally, catalyzes the synthesis of GMP from XMP. This chain is GMP synthase [glutamine-hydrolyzing], found in Campylobacter jejuni subsp. doylei (strain ATCC BAA-1458 / RM4099 / 269.97).